Here is a 553-residue protein sequence, read N- to C-terminus: Hydroxylamine reductase (553 aa).

[2Fe-2S] cluster contacts are provided by Cys3, Cys6, Cys18, and Cys25. Positions 249, 273, 317, 405, 433, 459, 493, and 495 each coordinate hybrid [4Fe-2O-2S] cluster. Residue Cys405 is modified to Cysteine persulfide.

Belongs to the HCP family. Requires [2Fe-2S] cluster as cofactor. The cofactor is hybrid [4Fe-2O-2S] cluster.

The protein localises to the cytoplasm. It carries out the reaction A + NH4(+) + H2O = hydroxylamine + AH2 + H(+). Catalyzes the reduction of hydroxylamine to form NH(3) and H(2)O. The polypeptide is Hydroxylamine reductase (Actinobacillus succinogenes (strain ATCC 55618 / DSM 22257 / CCUG 43843 / 130Z)).